The primary structure comprises 678 residues: Dihydroxyacetone phosphate acyltransferase (678 aa).

Residues serine 12 and serine 17 each carry the phosphoserine modification. Positions 161 to 166 match the HXXXXD motif motif; the sequence is HRSYID. Lysine 641 carries the post-translational modification N6-acetyllysine. The Microbody targeting signal signature appears at 676–678; it reads AKL.

Belongs to the GPAT/DAPAT family. As to quaternary structure, part of a heterotrimeric complex composed of GNPAT, AGPS and a modified form of GNPAT. In terms of tissue distribution, highly expressed in liver and testis. Lower levels in heart, brain, lung and kidney. Detected in spleen.

The protein localises to the peroxisome membrane. It catalyses the reaction dihydroxyacetone phosphate + an acyl-CoA = a 1-acylglycerone 3-phosphate + CoA. It carries out the reaction dihydroxyacetone phosphate + hexadecanoyl-CoA = 1-hexadecanoylglycerone 3-phosphate + CoA. The protein operates within membrane lipid metabolism; glycerophospholipid metabolism. In terms of biological role, dihydroxyacetonephosphate acyltransferase catalyzing the first step in the biosynthesis of plasmalogens, a subset of phospholipids that differ from other glycerolipids by having an alkyl chain attached through a vinyl ether linkage at the sn-1 position of the glycerol backbone, and which unique physical properties have an impact on various aspects of cell signaling and membrane biology. The chain is Dihydroxyacetone phosphate acyltransferase from Mus musculus (Mouse).